A 181-amino-acid polypeptide reads, in one-letter code: Adenylyl-sulfate kinase (181 aa).

ATP is bound at residue 20–27 (GLSGAGKS). S94 serves as the catalytic Phosphoserine intermediate.

This sequence belongs to the APS kinase family.

The enzyme catalyses adenosine 5'-phosphosulfate + ATP = 3'-phosphoadenylyl sulfate + ADP + H(+). The protein operates within sulfur metabolism; hydrogen sulfide biosynthesis; sulfite from sulfate: step 2/3. Functionally, catalyzes the synthesis of activated sulfate. The chain is Adenylyl-sulfate kinase from Deinococcus geothermalis (strain DSM 11300 / CIP 105573 / AG-3a).